The chain runs to 1819 residues: Protein REDUCED CHLOROPLAST COVERAGE 2 (1819 aa).

Over residues 1-17 (MAPKAGKTKPHKSKGEK) the composition is skewed to basic residues. Disordered regions lie at residues 1–23 (MAPK…KEEK), 128–180 (KPPV…GACE), 595–619 (QASS…GLGK), and 634–664 (KANK…LEKQ). 2 stretches are compositionally biased toward basic and acidic residues: residues 135-145 (LPKDSEKKESG) and 600-612 (SESK…KPEP). The region spanning 329-603 (EDETWGGDGG…NQASSKSESK (275 aa)) is the Clu domain. Residues 649–680 (TDNTSETEDQKELEKQNEEIEKMWKELVTETA) are a coiled coil. TPR repeat units lie at residues 892 to 925 (GRTL…LVAV), 934 to 967 (AGAY…NERE), 976 to 1009 (MKSY…LHLT), 1018 to 1051 (AATY…NQRL), and 1060 to 1093 (AASY…LQAK). Disordered stretches follow at residues 1152-1360 (SGIK…PMLS), 1413-1456 (KVNA…SPKE), 1468-1513 (KAFP…SESV), 1527-1573 (LKTV…ASAP), 1616-1670 (STPH…PRIM), and 1731-1809 (LVSE…DYSD). 2 stretches are compositionally biased toward basic and acidic residues: residues 1199 to 1224 (SSDK…EQSK) and 1230 to 1239 (KLVKPEATVH). Position 1244 is a phosphoserine (Ser-1244). Residues 1269-1313 (KLNTNFMNVTQQPSRSRGKSTNFTSPRTSSNELSISVAGSTSSPA) are compositionally biased toward polar residues. The residue at position 1320 (Ser-1320) is a Phosphoserine. Polar residues predominate over residues 1343-1354 (LASSACTEQINK). Composition is skewed to polar residues over residues 1496–1511 (CLLN…NGSE) and 1536–1546 (NLPNGDSSPKS). The segment covering 1551 to 1566 (DGEKQDACEAQKEMSK) has biased composition (basic and acidic residues). Over residues 1650-1665 (SFPNSTESNGEANQFN) the composition is skewed to polar residues. The segment covering 1742-1759 (SEEKSGSEEESNNDKNAG) has biased composition (basic and acidic residues). Residues 1767–1778 (QETTDTPENGHS) are compositionally biased toward polar residues. Residues 1785–1800 (TTSHETCDEKNGERQG) show a composition bias toward basic and acidic residues.

Expressed in the non-epidermal tissues of the true leaves. Not detected in the vegetative shoot meristem and leaf primordia.

The protein localises to the nucleus. It localises to the cytoplasm. It is found in the cytosol. In terms of biological role, negatively regulates meristematic tissue proliferation by integrating developmental signals with carbon source availability. May act as the scaffold of a protein complex, which sequesters key factors that are required for the G2 to M transition in meristematic tissues. Together with REC2, REC3 and FMT/CLU, contributes to the establishment of the cellular volume devoted to the chloroplast compartment. This is Protein REDUCED CHLOROPLAST COVERAGE 2 from Arabidopsis thaliana (Mouse-ear cress).